The primary structure comprises 113 residues: U11-theraphotoxin-Hhn1a (113 aa).

The signal sequence occupies residues 1 to 21 (MDTVRVAFLLVLVLAVSLGQA). Positions 22-74 (DKDENRMEMQEKTEQGKSYLDFAENLLLQKLEELEAKLLEEDSEESRNSRQKR) are excised as a propeptide. Residues 60-69 (LEEDSEESRN) are compositionally biased toward basic and acidic residues. The disordered stretch occupies residues 60 to 83 (LEEDSEESRNSRQKRCIGEGVPCD). 3 cysteine pairs are disulfide-bonded: Cys-75/Cys-90, Cys-82/Cys-95, and Cys-89/Cys-110.

The protein belongs to the neurotoxin 14 (magi-1) family. 01 (HNTX-16) subfamily. In terms of tissue distribution, expressed by the venom gland.

It localises to the secreted. Its function is as follows. Probable ion channel inhibitor. The polypeptide is U11-theraphotoxin-Hhn1a (Cyriopagopus hainanus (Chinese bird spider)).